Here is a 1943-residue protein sequence, read N- to C-terminus: Protocadherin-15 (1943 aa).

Positions 1–26 (MFLQFAVWKCLPHGILIASLLVVSWG) are cleaved as a signal peptide. At 27–1381 (QYDDDWQYED…GESLGYTEGA (1355 aa)) the chain is on the extracellular side. A disulfide bridge links Cys37 with Cys125. Cadherin domains follow at residues 45–152 (PATI…SPTF), 153–270 (KHES…GPMF), 283–400 (RPLT…SPYF), 401–514 (TMPS…TPTF), 515–621 (PEIS…PPRF), 622–722 (PQLM…APVF), 724–824 (PYLP…SPVF), 825–931 (TNST…PPVF), 932–1040 (SKRI…IPRF), 1042–1149 (QEEY…PPVF), and 1150–1264 (QKKF…PPTL). Residues Asn57, Asn102, and Asn206 are each glycosylated (N-linked (GlcNAc...) asparagine). Asn424, Asn564, Asn667, Asn729, Asn773, Asn826, and Asn856 each carry an N-linked (GlcNAc...) asparagine glycan. 3 N-linked (GlcNAc...) asparagine glycosylation sites follow: Asn1069, Asn1089, and Asn1180. A helical membrane pass occupies residues 1382 to 1402 (LLALAFIIILCCIPAILVVLV). At 1403–1943 (SYRQFKVRQA…VQPHSQSTSL (541 aa)) the chain is on the cytoplasmic side. 3 disordered regions span residues 1425–1453 (PAAK…AHLY), 1475–1533 (GNNS…STHN), and 1714–1865 (ILNS…EPHR). Pro residues predominate over residues 1431 to 1449 (APVPAAPAPPPPPPPPPPG). Basic and acidic residues-rich tracts occupy residues 1480–1489 (PEDRSSHRDG) and 1498–1509 (ESHEPAHVEGPL). 2 stretches are compositionally biased toward pro residues: residues 1742–1760 (PHPP…PRPP) and 1769–1779 (PLSPPNPPPPQ). Low complexity predominate over residues 1784–1795 (SLPISTPPTSSL). The segment covering 1796–1821 (PLPPPLSLPPPPRPPAPRLFPQPPST) has biased composition (pro residues). The segment covering 1822-1834 (SIPSTDSISAPAA) has biased composition (low complexity). Positions 1846 to 1858 (TTSTTQPPASNPQ) are enriched in polar residues.

In terms of assembly, antiparallel heterodimer with CDH23. Found in a complex with TMIE and LHFPL5. Interacts with LHFPL5/TMHS; this interaction is required for efficient localization to hair bundles. Interacts with MYO7A. Interacts with USH1G; this interaction may recruit USH1G to the plasma membrane. Interacts with TOMT. Isoforms CD1 and CD3 interact with TMC1 (via N-terminus) and TMC2 (via N-terminus). Interacts with PIEZO1. Expressed in brain and sensory epithelium of the developing inner ear. Expressed in the retina, in the photoreceptor inner segments, the outer plexiform layer, the inner nuclei layer and the ganglion cell layer and, more diffusely in the inner plexiform layer (at protein level). Not detected in the retinal pigment epithelium (at protein level). Expressed in the spleen, dorsal root ganglion, dorsal aspect of neural tube, floor plate and ependymal cells adjacent to the neural canal.

Its subcellular location is the cell membrane. It localises to the secreted. Its function is as follows. Calcium-dependent cell-adhesion protein. Required for inner ear neuroepithelial cell elaboration and cochlear function. Probably involved in the maintenance of normal retinal function. The sequence is that of Protocadherin-15 (Pcdh15) from Mus musculus (Mouse).